The following is a 605-amino-acid chain: Apoptosis-inducing factor 3 (605 aa).

Positions 22–45 (KERGKEELSASGKGSPRAYQGNGT) are disordered. In terms of domain architecture, Rieske spans 70–165 (AAVCHVKDLE…VKIEKEKVYV (96 aa)). The [2Fe-2S] cluster site is built by C109, H111, C128, and H131. FAD contacts are provided by residues 201 to 205 (GAGAA), R235, K240, V270, D467, and W514.

This sequence belongs to the FAD-dependent oxidoreductase family. Ubiquitous. Expressed in bone marrow, cerebral cortex, liver, ovary, thymus, thyroid gland and tongue (at protein level).

The protein resides in the mitochondrion. Induces apoptosis through a caspase dependent pathway. Reduces mitochondrial membrane potential. This Homo sapiens (Human) protein is Apoptosis-inducing factor 3 (AIFM3).